Here is an 821-residue protein sequence, read N- to C-terminus: Calpain-3 (821 aa).

Residues 1–37 (MPTVISPTVAPRTGAEPRSPGPVPHPAQGKTTEAGGG) form a disordered region. A Calpain catalytic domain is found at 74 to 417 (LYLDPEFPPD…FTKLEICNLT (344 aa)). Active-site residues include Cys-129, His-334, and Asn-358. The segment at 418 to 586 (ADALESDKLQ…KRNLSEEAEN (169 aa)) is domain III. The tract at residues 587 to 649 (TISVDRPVKK…RPGHTDQESE (63 aa)) is linker. Residues 603 to 651 (IFVSDRANSNKELGVDQEAEEGKDKTGPDKQGESPQPRPGHTDQESEEQ) form a disordered region. The span at 622–634 (EEGKDKTGPDKQG) shows a compositional bias: basic and acidic residues. EF-hand domains are found at residues 649 to 683 (EEQQQFRNIFRQIAGDDMEICADELKNVLNTVVNK), 692 to 725 (FTLESCRSMIALMDTDGSGRLNLQEFHHLWKKIK), 722 to 757 (KKIKAWQKIFKHYDTDHSGTINSYEMRNAVNDAGFH), and 787 to 821 (VRLEGMFRAFHAFDKDGDGIIKLNVLEWLQLTMYA). The domain IV stretch occupies residues 650–820 (EQQQFRNIFR…VLEWLQLTMY (171 aa)). Positions 662, 665, 667, 672, 705, 707, 709, 711, 716, 735, 737, 739, 741, 746, 800, 802, 804, and 806 each coordinate Ca(2+).

This sequence belongs to the peptidase C2 family. Homodimer; via EF-hand domain 4. Interacts with TTN/titin. Interacts with CMYA5; this interaction, which results in CMYA5 proteolysis, may protect CAPN3 from autolysis. Interacts with SIMC1. Interacts with UTP25; the interaction is required for CAPN3 translocation to the nucleolus. Skeletal muscle.

It localises to the cytoplasm. The protein resides in the nucleus. Its subcellular location is the nucleolus. The enzyme catalyses Broad endopeptidase activity.. Its activity is regulated as follows. Activated by micromolar concentrations of calcium and inhibited by calpastatin. Calcium-regulated non-lysosomal thiol-protease. Proteolytically cleaves CTBP1 at 'His-399'. Mediates, with UTP25, the proteasome-independent degradation of p53/TP53. The chain is Calpain-3 (Capn3) from Rattus norvegicus (Rat).